A 74-amino-acid polypeptide reads, in one-letter code: Dermaseptin-B3 (74 aa).

The first 22 residues, methionine 1 to cysteine 22, serve as a signal peptide directing secretion. Residues glutamate 23 to glutamate 43 constitute a propeptide that is removed on maturation.

In terms of tissue distribution, expressed by the skin glands.

It is found in the secreted. Its function is as follows. Possesses a potent antimicrobial activity against Gram-positive and Gram-negative bacteria. Probably acts by disturbing membrane functions with its amphipathic structure. The chain is Dermaseptin-B3 from Phyllomedusa bicolor (Two-colored leaf frog).